Here is a 935-residue protein sequence, read N- to C-terminus: Protein translocase subunit SecA (935 aa).

ATP contacts are provided by residues Gln90, 108–112, and Asp504; that span reads GEGKT.

It belongs to the SecA family. Monomer and homodimer. Part of the essential Sec protein translocation apparatus which comprises SecA, SecYEG and auxiliary proteins SecDF. Other proteins may also be involved.

It localises to the cell inner membrane. The protein resides in the cellular thylakoid membrane. Its subcellular location is the cytoplasm. It carries out the reaction ATP + H2O + cellular proteinSide 1 = ADP + phosphate + cellular proteinSide 2.. Its function is as follows. Part of the Sec protein translocase complex. Interacts with the SecYEG preprotein conducting channel. Has a central role in coupling the hydrolysis of ATP to the transfer of proteins into and across the cell membrane, serving as an ATP-driven molecular motor driving the stepwise translocation of polypeptide chains across the membrane. Probably participates in protein translocation into and across both the cytoplasmic and thylakoid membranes in cyanobacterial cells. This chain is Protein translocase subunit SecA, found in Gloeothece citriformis (strain PCC 7424) (Cyanothece sp. (strain PCC 7424)).